The sequence spans 1195 residues: Probable beta-tubulin polyglutamylase (1195 aa).

The interval 1–110 (MSQKDIYNKY…QTEMTDNQNE (110 aa)) is disordered. 2 stretches are compositionally biased toward acidic residues: residues 17–27 (DQQEEDDDENQ) and 44–79 (QGED…EENN). Coiled coils occupy residues 59-103 (DEEQ…QQTE) and 144-260 (QDMD…QSEQ). Residues 80–89 (QDQQNNSESN) show a composition bias toward low complexity. Residues 90 to 110 (LQYDKTNQKNQQTEMTDNQNE) are compositionally biased toward polar residues. The tract at residues 281 to 343 (PKNDVDQYTG…NKKEQAKKQQ (63 aa)) is disordered. Residues 294–316 (DSGESDEEANNEDDDEDEDDESE) are compositionally biased toward acidic residues. Basic residues predominate over residues 322–334 (RKNKAQLLKKKNN). The region spanning 350–703 (KQTLVLNVAD…TCKAKNEIIN (354 aa)) is the TTL domain. ATP contacts are provided by residues 500-503 (QRYL), lysine 513, and aspartate 515. The c-MTBD region stretch occupies residues 674 to 756 (PLDSYIKKNT…GFERIFPMED (83 aa)). Residues 783–862 (RNTKKVTEDP…ETIQCEDQEQ (80 aa)) form a disordered region. A compositionally biased stretch (polar residues) spans 825 to 849 (PNSQTTINKGIPGQNGQRPSSSQLN). The segment covering 850–860 (EEGETIQCEDQ) has biased composition (acidic residues).

The protein localises to the cytoplasm. The protein resides in the cytoskeleton. It localises to the cell projection. Its subcellular location is the cilium. It is found in the cilium basal body. In terms of biological role, probable tubulin polyglutamylase with a strong preference for beta-tubulin. The chain is Probable beta-tubulin polyglutamylase (Ttll6a) from Tetrahymena thermophila (strain SB210).